We begin with the raw amino-acid sequence, 163 residues long: MHTRAIYPGTFDPITNGHADLIERAAKLFKHVIIGIAANPSKQPRFTLEERVELVNRVTAHLDNVEVVGFSGLLVDFAKEQKASVLVRGLRAVSDFEYEFQLANMNRRLSPDLESVFLTPAEENSFISSTLVKEVALHGGDVNQFVHSEVATALAAKLKLAKP.

Thr10 provides a ligand contact to substrate. ATP-binding positions include 10-11 (TF) and His18. Positions 42, 74, and 88 each coordinate substrate. Residues 89-91 (GLR), Glu99, and 124-130 (NSFISST) contribute to the ATP site.

It belongs to the bacterial CoaD family. In terms of assembly, homohexamer. Requires Mg(2+) as cofactor.

It is found in the cytoplasm. It carries out the reaction (R)-4'-phosphopantetheine + ATP + H(+) = 3'-dephospho-CoA + diphosphate. The protein operates within cofactor biosynthesis; coenzyme A biosynthesis; CoA from (R)-pantothenate: step 4/5. Functionally, reversibly transfers an adenylyl group from ATP to 4'-phosphopantetheine, yielding dephospho-CoA (dPCoA) and pyrophosphate. In Shewanella baltica (strain OS223), this protein is Phosphopantetheine adenylyltransferase.